Consider the following 204-residue polypeptide: Ribonuclease HII (204 aa).

One can recognise an RNase H type-2 domain in the interval 1–197 (MILGIDEAGR…KNCILNPKLL (197 aa)). A divalent metal cation-binding residues include aspartate 6, glutamate 7, and aspartate 103.

It belongs to the RNase HII family. Mn(2+) serves as cofactor. Mg(2+) is required as a cofactor.

The protein resides in the cytoplasm. It catalyses the reaction Endonucleolytic cleavage to 5'-phosphomonoester.. In terms of biological role, endonuclease that specifically degrades the RNA of RNA-DNA hybrids. The polypeptide is Ribonuclease HII (Helicobacter pylori (strain P12)).